The chain runs to 257 residues: UPF0246 protein YaaA (257 aa).

This sequence belongs to the UPF0246 family.

This Salmonella choleraesuis (strain SC-B67) protein is UPF0246 protein YaaA.